A 599-amino-acid chain; its full sequence is MTTQVPPSALLPLNPEQLARLQAATTDLTPTQLAWVSGYFWGVLNQQPAALAATPAPAAEMPGITIISASQTGNARRVAEALRDDLLAAKLNVKLVNAGDYKFKQIASEKLLIVVTSTQGEGEPPEEAVALHKFLFSKKAPKLENTAFAVFSLGDSSYEFFCQSGKDFDSKLAELGGERLLDRVDADVEYQAAASEWRARVVDALKSRAPVAAPSQSVATGAVNEIHTSPYSKDAPLVASLSVNQKITGRNSEKDVRHIEIDLGDSGMRYQPGDALGVWYQNDPALVKELVELLWLKGDEPVTVEGKTLPLNEALQWHFELTVNTANIVENYATLTRSETLLPLVGDKAKLQHYAATTPIVDMVRFSPAQLDAEALINLLRPLTPRLYSIASSQAEVENEVHVTVGVVRYDVEGRARAGGASSFLADRVEEEGEVRVFIEHNDNFRLPANPETPVIMIGPGTGIAPFRAFMQQRAADEAPGKNWLFFGNPHFTEDFLYQVEWQRYVKDGVLTRIDLAWSRDQKEKVYVQDKLREQGAELWRWINDGAHIYVCGDANRMAKDVEQALLEVIAEFGGMDTEAADEFLSELRVERRYQRDVY.

In terms of domain architecture, Flavodoxin-like spans 64–202; it reads ITIISASQTG…AASEWRARVV (139 aa). FMN contacts are provided by residues 70–75, 117–120, and 153–162; these read SQTGNA, STQG, and LGDSSYEFFC. Positions 234–448 constitute an FAD-binding FR-type domain; that stretch reads DAPLVASLSV…IEHNDNFRLP (215 aa). Residues Thr-322, Ala-356, 386-389, 404-406, Tyr-410, and 419-422 contribute to the FAD site; these read RLYS, TVG, and GGAS. Residues 519 to 520, 525 to 529, and Asp-561 each bind NADP(+); these read SR and KVYVQ. Tyr-599 is a binding site for FAD.

It belongs to the NADPH-dependent sulphite reductase flavoprotein subunit CysJ family. In the N-terminal section; belongs to the flavodoxin family. This sequence in the C-terminal section; belongs to the flavoprotein pyridine nucleotide cytochrome reductase family. Alpha(8)-beta(8). The alpha component is a flavoprotein, the beta component is a hemoprotein. It depends on FAD as a cofactor. The cofactor is FMN.

It carries out the reaction hydrogen sulfide + 3 NADP(+) + 3 H2O = sulfite + 3 NADPH + 4 H(+). The protein operates within sulfur metabolism; hydrogen sulfide biosynthesis; hydrogen sulfide from sulfite (NADPH route): step 1/1. Functionally, component of the sulfite reductase complex that catalyzes the 6-electron reduction of sulfite to sulfide. This is one of several activities required for the biosynthesis of L-cysteine from sulfate. The flavoprotein component catalyzes the electron flow from NADPH -&gt; FAD -&gt; FMN to the hemoprotein component. The chain is Sulfite reductase [NADPH] flavoprotein alpha-component from Escherichia coli (strain K12).